A 79-amino-acid polypeptide reads, in one-letter code: Orally active insecticidal peptide (79 aa).

The first 19 residues, 1–19 (MRVLFIIAGLALLSVVCYT), serve as a signal peptide directing secretion. A propeptide spanning residues 20-44 (SEMKERSSFNEVLSEFFAADEPQER) is cleaved from the precursor. 3 disulfides stabilise this stretch: C46-C61, C53-C66, and C60-C73. Position 77 is an alanine amide (A77).

It belongs to the neurotoxin 03 (Tx2) family. 01 subfamily. As to expression, expressed by the venom gland.

The protein resides in the secreted. Functionally, probable ion channel inhibitor. Shows insecticidal activity when injected into mealworms. This is Orally active insecticidal peptide from Selenotypus plumipes (Australian featherleg tarantula).